The following is a 482-amino-acid chain: tRNA sulfurtransferase (482 aa).

Residues 61-165 (LAIRDALTRI…DDRLLLIKGR (105 aa)) enclose the THUMP domain. Residues 183-184 (LI), Lys265, Gly287, and Gln296 each bind ATP. Cys344 and Cys456 form a disulfide bridge. The Rhodanese domain occupies 404–482 (FGANDVILDI…GFANVKVYRP (79 aa)). Cys456 serves as the catalytic Cysteine persulfide intermediate.

The protein belongs to the ThiI family.

The protein resides in the cytoplasm. It catalyses the reaction [ThiI sulfur-carrier protein]-S-sulfanyl-L-cysteine + a uridine in tRNA + 2 reduced [2Fe-2S]-[ferredoxin] + ATP + H(+) = [ThiI sulfur-carrier protein]-L-cysteine + a 4-thiouridine in tRNA + 2 oxidized [2Fe-2S]-[ferredoxin] + AMP + diphosphate. The enzyme catalyses [ThiS sulfur-carrier protein]-C-terminal Gly-Gly-AMP + S-sulfanyl-L-cysteinyl-[cysteine desulfurase] + AH2 = [ThiS sulfur-carrier protein]-C-terminal-Gly-aminoethanethioate + L-cysteinyl-[cysteine desulfurase] + A + AMP + 2 H(+). It functions in the pathway cofactor biosynthesis; thiamine diphosphate biosynthesis. Functionally, catalyzes the ATP-dependent transfer of a sulfur to tRNA to produce 4-thiouridine in position 8 of tRNAs, which functions as a near-UV photosensor. Also catalyzes the transfer of sulfur to the sulfur carrier protein ThiS, forming ThiS-thiocarboxylate. This is a step in the synthesis of thiazole, in the thiamine biosynthesis pathway. The sulfur is donated as persulfide by IscS. The protein is tRNA sulfurtransferase of Salmonella typhi.